Here is a 365-residue protein sequence, read N- to C-terminus: Probable G-protein coupled receptor 142 (365 aa).

Over 1-66 the chain is Extracellular; that stretch reads MHLNSNPNSY…WPESPERSPC (66 aa). N-linked (GlcNAc...) asparagine glycosylation occurs at asparagine 44. A helical transmembrane segment spans residues 67-87; sequence VAGIIPVIYYSVLLSLGLPVA. The Cytoplasmic portion of the chain corresponds to 88–102; sequence LARLAARTRKPSYHY. The chain crosses the membrane as a helical span at residues 103–123; sequence LLALTASDIVTQVIIVFVGFL. Over 124-140 the chain is Extracellular; sequence LQGAVLARQVPQAVVRT. The chain crosses the membrane as a helical span at residues 141–161; sequence ANILEFAANHASVWIAVLFTV. The Cytoplasmic portion of the chain corresponds to 162–185; the sequence is DRYNALCRPLRHRATSSPGRTHRA. Residues 186–206 traverse the membrane as a helical segment; that stretch reads IAAVIGVTLLTGIPFYWWLDV. Topologically, residues 207–224 are extracellular; that stretch reads WRDADPPSTMDKLLKWAH. A helical membrane pass occupies residues 225–245; sequence CLIVYFIPCNVFLVTNSAIIL. Topologically, residues 246 to 264 are cytoplasmic; sequence RLRKRGQRGLRPLVSKSTA. A helical transmembrane segment spans residues 265 to 285; that stretch reads ILLGVTSLFALLWAPRIIVML. At 286–304 the chain is on the extracellular side; sequence YHLYVAPVHRDWRVHLALD. Residues 305-325 form a helical membrane-spanning segment; the sequence is IANMLAMLNTEVNFGLYCFIS. Residues 326 to 365 lie on the Cytoplasmic side of the membrane; that stretch reads KTFRATVRQVICDVHMACALKSQPKQTVVELMLKSVGTEL.

The protein belongs to the G-protein coupled receptor 1 family.

The protein localises to the cell membrane. Its function is as follows. Orphan receptor. This Mus musculus (Mouse) protein is Probable G-protein coupled receptor 142 (Gpr142).